Reading from the N-terminus, the 158-residue chain is Protein EOLA2 (158 aa).

An ASCH domain is found at 6–92 (LSFRQPYAGF…IAGLVDIGET (87 aa)).

It belongs to the EOLA family.

The sequence is that of Protein EOLA2 from Homo sapiens (Human).